We begin with the raw amino-acid sequence, 645 residues long: Matrix metalloproteinase-24 (645 aa).

The span at 1 to 10 (MPRSRGGRAA) shows a compositional bias: low complexity. Positions 1–26 (MPRSRGGRAAPGPPPPPPPPGQAPRW) are disordered. The N-terminal stretch at 1–52 (MPRSRGGRAAPGPPPPPPPPGQAPRWSRWRVPGRLLLLLLPALCCLPGAARA) is a signal peptide. Residues 11-22 (PGPPPPPPPPGQ) show a composition bias toward pro residues. A propeptide spanning residues 53–155 (AAAAAGAGNR…HLSRRRRNKR (103 aa)) is cleaved from the precursor. The Extracellular portion of the chain corresponds to 53–602 (AAAAAGAGNR…INDVPGSVNA (550 aa)). Positions 137–144 (PRCGVPDH) match the Cysteine switch motif. Zn(2+)-binding residues include cysteine 139 and histidine 282. Glutamate 283 is an active-site residue. The Zn(2+) site is built by histidine 286 and histidine 292. The interval 323–380 (QKIYGPPAEPLEPTRPLPTLPVRRIHSPSERKHERQPRPPRPPLGDRPSTPGTKPNIC) is disordered. A compositionally biased stretch (pro residues) spans 329–341 (PAEPLEPTRPLPT). A compositionally biased stretch (basic and acidic residues) spans 349-359 (SPSERKHERQP). Hemopexin repeat units follow at residues 377–425 (PNIC…WKGL), 426–471 (PARI…GSCL), 473–521 (REGI…KGIP), and 522–569 (QAPQ…WMGC). Cysteine 380 and cysteine 569 are oxidised to a cystine. A helical membrane pass occupies residues 603–623 (VAVVIPCILSLCILVLVYTIF). Residues 624–645 (QFKNKTGPQPVTYYKRPVQEWV) are Cytoplasmic-facing. The PDZ-binding signature appears at 643–645 (EWV).

This sequence belongs to the peptidase M10A family. As to quaternary structure, interacts (via PDZ-binding motif) with APBA3 (via PDZ domain). Interacts with GRIP1 and GRIP2. Requires Zn(2+) as cofactor. Ca(2+) serves as cofactor. Cleaved by a furin endopeptidase in the trans-Golgi network. As to expression, predominantly expressed in brain, kidney, pancreas and lung. Overexpressed in a series of brain tumors, including astrocytomas and glioblastomas.

The protein localises to the cell membrane. Its subcellular location is the golgi apparatus. It is found in the trans-Golgi network membrane. It localises to the secreted. The protein resides in the extracellular space. The protein localises to the extracellular matrix. Metalloprotease that mediates cleavage of N-cadherin (CDH2) and acts as a regulator of neuro-immune interactions and neural stem cell quiescence. Involved in cell-cell interactions between nociceptive neurites and mast cells, possibly by mediating cleavage of CDH2, thereby acting as a mediator of peripheral thermal nociception and inflammatory hyperalgesia. Key regulator of neural stem cells quiescence by mediating cleavage of CDH2, affecting CDH2-mediated anchorage of neural stem cells to ependymocytes in the adult subependymal zone, leading to modulate their quiescence. May play a role in axonal growth. Able to activate progelatinase A. May also be a proteoglycanase involved in degradation of proteoglycans, such as dermatan sulfate and chondroitin sulfate proteoglycans. Cleaves partially fibronectin, but not collagen type I, nor laminin. This Homo sapiens (Human) protein is Matrix metalloproteinase-24 (MMP24).